Consider the following 150-residue polypeptide: Transcriptional regulator MraZ (150 aa).

2 consecutive SpoVT-AbrB domains span residues valine 5–glutamate 51 and alanine 80–threonine 123.

The protein belongs to the MraZ family. In terms of assembly, forms oligomers.

The protein resides in the cytoplasm. It localises to the nucleoid. The polypeptide is Transcriptional regulator MraZ (Thioalkalivibrio sulfidiphilus (strain HL-EbGR7)).